Consider the following 63-residue polypeptide: Small ribosomal subunit protein eS17 (63 aa).

This sequence belongs to the eukaryotic ribosomal protein eS17 family.

The sequence is that of Small ribosomal subunit protein eS17 from Methanococcus maripaludis (strain C6 / ATCC BAA-1332).